A 288-amino-acid polypeptide reads, in one-letter code: Oxaloacetate decarboxylase (288 aa).

Serine 47 is a substrate binding site. A Mg(2+)-binding site is contributed by aspartate 85. Substrate is bound by residues arginine 156 and histidine 232.

Belongs to the isocitrate lyase/PEP mutase superfamily. Oxaloacetate decarboxylase family. In terms of assembly, homotetramer; dimer of dimers. Mg(2+) is required as a cofactor.

The enzyme catalyses oxaloacetate + H(+) = pyruvate + CO2. Functionally, catalyzes the decarboxylation of oxaloacetate into pyruvate. Seems to play a role in maintaining cellular concentrations of bicarbonate and pyruvate. This is Oxaloacetate decarboxylase from Bradyrhizobium sp. (strain BTAi1 / ATCC BAA-1182).